A 489-amino-acid chain; its full sequence is Virion host shutoff protein (489 aa).

4 disordered regions span residues 110–135 (EEAS…AFSN), 142–161 (SLAS…PSAA), 285–319 (RSQT…ETRV), and 332–364 (GYED…LTPP). The span at 124–134 (ITDSRPSSAFS) shows a compositional bias: polar residues.

The protein belongs to the herpesviridae VHS protein family. Interacts with human EIF4H, EIF4A1 and EIF4A2; interaction with eIF4AI and EIF4A2 presumably allows Vhs protein to associate with the eIF4F cap-binding complex.

Its subcellular location is the virion. Functionally, minor structural protein that acts as an endoribonuclease during lytic infection. Degrades host mRNAs in the cytoplasm by cutting them at preferred sites, including some in regions of translation initiation. Together with inhibition of host splicing by ICP27, contributes to an overall decrease in host protein synthesis. Also, after the onset of viral transcription, accelerates the turnover of viral mRNA, thereby facilitating the sequential expression of different classes of viral genes. Binds translation initiation factors eIF4H, eIF4AI, and eIF4AII, thereby may interact directly with the translation initiation complex and thus digest specifically mRNAs. Also impedes antigen presentation by major histocompatibility complex class I and class II molecules, inhibits secretion of cytokines that would otherwise recruit lymphocytes and neutrophils cells to the site of infection and blocks the activation of dendritic cells. Plays a role in the inhibition of interferon-beta activation by the cGAS/STING pathway. Mechanistically, down-regulates the expression of host cGAS/MB21D1. Also decreases the accumulation of other interferon-induced mRNAs such as host IFIT3 or CH25H to subvert their antiviral activity. The chain is Virion host shutoff protein (UL41) from Human herpesvirus 1 (strain 17) (HHV-1).